The sequence spans 157 residues: MTGAVCPGSFDPVTLGHVDVFERAAAQFDEVVVAILVNPAKKGMFDLDERIAMIEESTAHLPNLRVEAGQGLVVDFVKAQGMNAIVKGLRTGTDFEYELQMAQMNKHIAGVDTFFVATAPRYSFVSSSLAKEVAMLGGDVSELLPEPVNRRLRERTK.

Ser9 serves as a coordination point for substrate. ATP-binding positions include 9-10 and His17; that span reads SF. Substrate contacts are provided by Lys41, Val73, and Lys87. Residues 88–90, Glu98, and 122–128 each bind ATP; these read GLR and YSFVSSS.

Belongs to the bacterial CoaD family. Homohexamer. Mg(2+) serves as cofactor.

The protein localises to the cytoplasm. It carries out the reaction (R)-4'-phosphopantetheine + ATP + H(+) = 3'-dephospho-CoA + diphosphate. Its pathway is cofactor biosynthesis; coenzyme A biosynthesis; CoA from (R)-pantothenate: step 4/5. In terms of biological role, reversibly transfers an adenylyl group from ATP to 4'-phosphopantetheine, yielding dephospho-CoA (dPCoA) and pyrophosphate. This is Phosphopantetheine adenylyltransferase from Mycobacterium marinum (strain ATCC BAA-535 / M).